The chain runs to 453 residues: Homogentisate 1,2-dioxygenase (453 aa).

The active-site Proton acceptor is the H304. Positions 347 and 353 each coordinate Fe cation. Residues Y362 and H383 each contribute to the homogentisate site. H383 is a binding site for Fe cation.

This sequence belongs to the homogentisate dioxygenase family. In terms of assembly, hexamer; dimer of trimers. Requires Fe cation as cofactor.

The catalysed reaction is homogentisate + O2 = 4-maleylacetoacetate + H(+). It functions in the pathway amino-acid degradation; L-phenylalanine degradation; acetoacetate and fumarate from L-phenylalanine: step 4/6. In terms of biological role, involved in the catabolism of homogentisate (2,5-dihydroxyphenylacetate or 2,5-OH-PhAc), a central intermediate in the degradation of phenylalanine and tyrosine. Catalyzes the oxidative ring cleavage of the aromatic ring of homogentisate to yield maleylacetoacetate. The protein is Homogentisate 1,2-dioxygenase of Sinorhizobium fredii (strain NBRC 101917 / NGR234).